A 182-amino-acid chain; its full sequence is Crossover junction endodeoxyribonuclease RuvC (182 aa).

Active-site residues include Asp7, Glu67, and Asp139. The Mg(2+) site is built by Asp7, Glu67, and Asp139.

The protein belongs to the RuvC family. In terms of assembly, homodimer which binds Holliday junction (HJ) DNA. The HJ becomes 2-fold symmetrical on binding to RuvC with unstacked arms; it has a different conformation from HJ DNA in complex with RuvA. In the full resolvosome a probable DNA-RuvA(4)-RuvB(12)-RuvC(2) complex forms which resolves the HJ. It depends on Mg(2+) as a cofactor.

The protein resides in the cytoplasm. The catalysed reaction is Endonucleolytic cleavage at a junction such as a reciprocal single-stranded crossover between two homologous DNA duplexes (Holliday junction).. In terms of biological role, the RuvA-RuvB-RuvC complex processes Holliday junction (HJ) DNA during genetic recombination and DNA repair. Endonuclease that resolves HJ intermediates. Cleaves cruciform DNA by making single-stranded nicks across the HJ at symmetrical positions within the homologous arms, yielding a 5'-phosphate and a 3'-hydroxyl group; requires a central core of homology in the junction. The consensus cleavage sequence is 5'-(A/T)TT(C/G)-3'. Cleavage occurs on the 3'-side of the TT dinucleotide at the point of strand exchange. HJ branch migration catalyzed by RuvA-RuvB allows RuvC to scan DNA until it finds its consensus sequence, where it cleaves and resolves the cruciform DNA. The sequence is that of Crossover junction endodeoxyribonuclease RuvC from Bordetella petrii (strain ATCC BAA-461 / DSM 12804 / CCUG 43448).